We begin with the raw amino-acid sequence, 215 residues long: MTKIKICGITRLSDALESCRAGADALGFNFSSLSPRAITPERAKEIIEKLPPFVASTGIFVDQSPEEINAICRFCKLQIAQLHSEQYSPEDARAITEAKVIKVFRPEENFAVEEVFAFAEKSGINAFLFDAYRPDMAGGTGETIRASLATRIFNALGDSCYPILAGGLNESNIGEAIRSLQPYGVDTASGVECEPGIKDPVKIKAFIQAVRKTVF.

It belongs to the TrpF family.

It carries out the reaction N-(5-phospho-beta-D-ribosyl)anthranilate = 1-(2-carboxyphenylamino)-1-deoxy-D-ribulose 5-phosphate. The protein operates within amino-acid biosynthesis; L-tryptophan biosynthesis; L-tryptophan from chorismate: step 3/5. This is N-(5'-phosphoribosyl)anthranilate isomerase from Pelodictyon phaeoclathratiforme (strain DSM 5477 / BU-1).